The sequence spans 242 residues: Glucosamine-6-phosphate deaminase (242 aa).

Catalysis depends on Asp71, which acts as the Proton acceptor; for enolization step. Asn142 functions as the For ring-opening step in the catalytic mechanism. The Proton acceptor; for ring-opening step role is filled by His144. Catalysis depends on Glu149, which acts as the For ring-opening step.

It belongs to the glucosamine/galactosamine-6-phosphate isomerase family. NagB subfamily.

The catalysed reaction is alpha-D-glucosamine 6-phosphate + H2O = beta-D-fructose 6-phosphate + NH4(+). It participates in amino-sugar metabolism; N-acetylneuraminate degradation; D-fructose 6-phosphate from N-acetylneuraminate: step 5/5. Functionally, catalyzes the reversible isomerization-deamination of glucosamine 6-phosphate (GlcN6P) to form fructose 6-phosphate (Fru6P) and ammonium ion. This chain is Glucosamine-6-phosphate deaminase, found in Malacoplasma penetrans (strain HF-2) (Mycoplasma penetrans).